The sequence spans 341 residues: MRHLTLALDIMGGDNGPHIILSAALKALNEFPHLNLIFCGDEDVITSWLNQHSSSLSNRYSIVHCNQQVLMDDNPVKALRHKKDSSMACAIKHVHNEQADACVSAGNTGALLAMACSQLKTLSGVNRPALVSSLPTAKGHKVYLLDLGATVQSDAQTLLQNAVMGSVLAEQIAGIERPRVAILNVGEEQIKGPANIKEASQLLAASDHLNYIGFVEGDDIFNDIADVIVTDGFSGNIALKSCEGLVKLLIEQVKRDAKRNILSKIMAKLAMPLLRRLYLRVNPDQYNGASLIGLRGIVVKSHGNASDEAFLYAIREAVQEAERQVPTKIKDKIENLLMERS.

This sequence belongs to the PlsX family. As to quaternary structure, homodimer. Probably interacts with PlsY.

It localises to the cytoplasm. The enzyme catalyses a fatty acyl-[ACP] + phosphate = an acyl phosphate + holo-[ACP]. Its pathway is lipid metabolism; phospholipid metabolism. In terms of biological role, catalyzes the reversible formation of acyl-phosphate (acyl-PO(4)) from acyl-[acyl-carrier-protein] (acyl-ACP). This enzyme utilizes acyl-ACP as fatty acyl donor, but not acyl-CoA. The chain is Phosphate acyltransferase from Pseudoalteromonas atlantica (strain T6c / ATCC BAA-1087).